Consider the following 78-residue polypeptide: Putative membrane protein insertion efficiency factor (78 aa).

Belongs to the UPF0161 family.

It is found in the cell membrane. In terms of biological role, could be involved in insertion of integral membrane proteins into the membrane. The protein is Putative membrane protein insertion efficiency factor of Bacillus mycoides (strain KBAB4) (Bacillus weihenstephanensis).